Here is a 328-residue protein sequence, read N- to C-terminus: Isopenicillin N synthase (328 aa).

Isopenicillin N contacts are provided by arginine 85, tyrosine 89, serine 181, and tyrosine 187. Residues arginine 85, tyrosine 89, serine 181, tyrosine 187, histidine 210, and aspartate 212 each coordinate N-[(5S)-5-amino-5-carboxypentanoyl]-L-cysteinyl-D-valine. One can recognise a Fe2OG dioxygenase domain in the interval 178–284 (TLSSVSLIRY…RLSLPFFFHA (107 aa)). Fe(2+) is bound by residues histidine 210, aspartate 212, and histidine 266. Residue arginine 275 participates in 2-oxoglutarate binding. Serine 277 lines the isopenicillin N pocket. Serine 277 serves as a coordination point for N-[(5S)-5-amino-5-carboxypentanoyl]-L-cysteinyl-D-valine.

It belongs to the iron/ascorbate-dependent oxidoreductase family. Fe cation is required as a cofactor. The cofactor is L-ascorbate.

The enzyme catalyses N-[(5S)-5-amino-5-carboxypentanoyl]-L-cysteinyl-D-valine + O2 = isopenicillin N + 2 H2O. It participates in antibiotic biosynthesis; penicillin G biosynthesis; penicillin G from L-alpha-aminoadipate and L-cysteine and L-valine: step 2/3. Functionally, removes, in the presence of oxygen, 4 hydrogen atoms from delta-L-(alpha-aminoadipyl)-L-cysteinyl-D-valine (ACV) to form the azetidinone and thiazolidine rings of isopenicillin. The sequence is that of Isopenicillin N synthase (pcbC) from Amycolatopsis lactamdurans (Nocardia lactamdurans).